The primary structure comprises 874 residues: Cellulose synthase catalytic subunit [UDP-forming] (874 aa).

The next 4 membrane-spanning stretches (helical) occupy residues 30-50 (SPFSAALGCLWTILAWIVFPL), 151-171 (ILGVIVTFSLILALICITQPF), 173-193 (PLSQFIFLLLLWGVALLVRRM), and 230-250 (LVCGLILLFAETYAWIVLVLG). Residues 271-364 (QWPTVDIFVP…FVAIFDCDHV (94 aa)) form a catalytic subdomain A region. Asp-313 is a catalytic residue. 2 residues coordinate substrate: Asp-360 and Asp-362. The catalytic subdomain B stretch occupies residues 441 to 501 (KPLDEIGGIA…GQRIRWARGM (61 aa)). Asp-457 is a catalytic residue. 5 consecutive transmembrane segments (helical) span residues 525-545 (LNAMFHFLSGIPRLIFLTAPL), 547-567 (FLLLHAYIIYAPALMIALFVI), 592-612 (IYETVLAWYIAPPTLVALINP), 634-654 (VISRPYIFLVLLNLLGVAAGV), and 668-688 (VIVSLVWVFYNLVILGGAVAV). One can recognise a PilZ domain in the interval 694 to 790 (QVRRAHRVEI…QHIDFVQCTF (97 aa)). Residues 833–853 (SVKVIFRSLTALIAWIVSFIP) traverse the membrane as a helical segment.

The protein belongs to the glycosyltransferase 2 family. The cofactor is Mg(2+).

It is found in the cell inner membrane. It carries out the reaction [(1-&gt;4)-beta-D-glucosyl](n) + UDP-alpha-D-glucose = [(1-&gt;4)-beta-D-glucosyl](n+1) + UDP + H(+). The protein operates within glycan metabolism; bacterial cellulose biosynthesis. With respect to regulation, activated by bis-(3'-5') cyclic diguanylic acid (c-di-GMP). Catalytic subunit of cellulose synthase. It polymerizes uridine 5'-diphosphate glucose to cellulose, which is produced as an extracellular component for mechanical and chemical protection at the onset of the stationary phase, when the cells exhibit multicellular behavior (rdar morphotype). Coexpression of cellulose and thin aggregative fimbriae leads to a hydrophobic network with tightly packed cells embedded in a highly inert matrix. The polypeptide is Cellulose synthase catalytic subunit [UDP-forming] (bcsA) (Salmonella typhimurium (strain LT2 / SGSC1412 / ATCC 700720)).